The sequence spans 537 residues: Chaperonin GroEL (537 aa).

ATP contacts are provided by residues Thr29–Pro32, Asp86–Thr90, Gly413, Asn477–Ala479, and Asp493.

It belongs to the chaperonin (HSP60) family. As to quaternary structure, forms a cylinder of 14 subunits composed of two heptameric rings stacked back-to-back. Interacts with the co-chaperonin GroES.

The protein resides in the cytoplasm. The enzyme catalyses ATP + H2O + a folded polypeptide = ADP + phosphate + an unfolded polypeptide.. In terms of biological role, together with its co-chaperonin GroES, plays an essential role in assisting protein folding. The GroEL-GroES system forms a nano-cage that allows encapsulation of the non-native substrate proteins and provides a physical environment optimized to promote and accelerate protein folding. In Bifidobacterium animalis subsp. lactis (strain AD011), this protein is Chaperonin GroEL.